The following is a 219-amino-acid chain: Response regulator ArlR (219 aa).

Residues 3–116 form the Response regulatory domain; that stretch reads NILIVEDEQN…ELLARIRAVL (114 aa). Residue Asp-52 is modified to 4-aspartylphosphate. Residues 122-219 constitute a DNA-binding region (ompR/PhoB-type); it reads KDVLDINGII…TVRGVGYVIR (98 aa).

In terms of processing, phosphorylated by ArlS.

The protein localises to the cytoplasm. Member of the two-component regulatory system ArlS/ArlR. This is Response regulator ArlR (arlR) from Staphylococcus epidermidis (strain ATCC 35984 / DSM 28319 / BCRC 17069 / CCUG 31568 / BM 3577 / RP62A).